A 238-amino-acid chain; its full sequence is 1-(5-phosphoribosyl)-5-[(5-phosphoribosylamino)methylideneamino] imidazole-4-carboxamide isomerase (238 aa).

Aspartate 8 acts as the Proton acceptor in catalysis. Aspartate 127 serves as the catalytic Proton donor.

It belongs to the HisA/HisF family.

It localises to the cytoplasm. It catalyses the reaction 1-(5-phospho-beta-D-ribosyl)-5-[(5-phospho-beta-D-ribosylamino)methylideneamino]imidazole-4-carboxamide = 5-[(5-phospho-1-deoxy-D-ribulos-1-ylimino)methylamino]-1-(5-phospho-beta-D-ribosyl)imidazole-4-carboxamide. It participates in amino-acid biosynthesis; L-histidine biosynthesis; L-histidine from 5-phospho-alpha-D-ribose 1-diphosphate: step 4/9. In Nitratiruptor sp. (strain SB155-2), this protein is 1-(5-phosphoribosyl)-5-[(5-phosphoribosylamino)methylideneamino] imidazole-4-carboxamide isomerase.